Here is a 505-residue protein sequence, read N- to C-terminus: Histidine ammonia-lyase (505 aa).

Residues 144-146 (ASG) constitute a cross-link (5-imidazolinone (Ala-Gly)). 2,3-didehydroalanine (Ser) is present on S145.

The protein belongs to the PAL/histidase family. Contains an active site 4-methylidene-imidazol-5-one (MIO), which is formed autocatalytically by cyclization and dehydration of residues Ala-Ser-Gly.

It localises to the cytoplasm. It catalyses the reaction L-histidine = trans-urocanate + NH4(+). Its pathway is amino-acid degradation; L-histidine degradation into L-glutamate; N-formimidoyl-L-glutamate from L-histidine: step 1/3. The sequence is that of Histidine ammonia-lyase from Legionella pneumophila (strain Corby).